A 2220-amino-acid polypeptide reads, in one-letter code: MARPTTSAAIFSPQNSPPKRSYLAYIRSKLVDDRTLAPLLQAILSLPETWRSLVAARADMADMIEAPRLVQSFVDWINTGSTDILESELAAIVTLPLLTIIHMVQYYEYLQGAGCSHIELLESFDGGVQGHCIGLLSAIVVASAGSEEDLIARAVAGLRLSLAIGAFGDLGEYSTNLRSSTLVFRLKDMSAADEIVHRFPGTYISTVTDSRTVSMVVPGSQVTDLMAYADKNGLQPRSVHIRSRLHDATNTDMAQACREFCDSLEGLPFGAGETLLTSVRSNRTGDCLSDIPESLSTEVIDTILLSMCNWTKVMRNLVTDLKESSKSQHTLALFGIGDSVPLELFRQNDVDITKFQAVSLAPTAPSPENGLRPTDFFPSDAIAVVGAGFRLPGASTFEELWEMISEGKTRLEPFRTDRSDLKGSYRAGQDKEWTKKRNFFGNYVEDIDSFDHSFFGISPREAKYMDPQQRLLLLTAWEAMDSAGMLRYHRRERGDNVGCFVGASFNEYVENTSGYSASAFTATGTIRAFLSGKVSYHFGWTGPSEVIDTACSASIVAVHRACQAIKSGECPVAVAGGVNLITGITNYFDLAKASFLSPTGQCKPFDDSGDGYCRADGVGLVVLKSLSQAVADGDHIMGVIPSIATNQGGIGAPGITVPDGIMQRALYKKVLAKSGMRAEDITYVEAHGTGTPVGDPIEIRSIREVFGGAKRPSPLYLGSLKANVGHSETAAGVASLLKVLTMFREQGIPPIANFKRLNHNIPALETDRMAIPTSQMPWNARQRIACINSYGASGSNSALICSEWPDNNIRDAKDRISAHTPAYPILLSANSKESLQRYAKDLATYLTKTNADKNLGDLAFTLSERRKHHRYRWSTTAADMASVVDQLQSPLEGVIDSTKTGKKVVLAFSGQSRTNIGVDPSVIQAYPRFMEHMKQCSSILQSLGCPDILPYLSQTDPISDPVILQCGTVSVQISTAKCWMDGGVQVDGIVGHSLGELASLAISGVLSLKDTLTAVYTRAQLINLKWGSERGTMMAIHAKVDVIQSVIAKVKAEVSSEDDEVEIACYNSVGSHVIVGKDSSIAIAEKVLQGDAKYQGLRYQRVGTSHGFHSRFTKPLLLDLVRFEKTLEFKKPIIPLETCTQVPFNFESNDSTYLAHHARDPVYFYDAVQRLEKRLGACAFLEAGWGTPVVSMAKKAVADATQHTFQAVTSPATATANLWREGCSITFWSFLTPKQSMLKPIWTPPYSFDNSKSWLDHVDNASVALKAAEAAIAAAATQGSPSTPTEEPRAAQLVRYKGALGENAHEFGLSTSTERFTKIVSGHAVKARPLCPASVYMESAIMGCELIGTSGRDKTISFTNISFQRPLGINDKLDVKLHLSKTAKFGDEHWHYSMQSSASAVYSEGDFTMTAGPHQDMELYALLASDGMVALRNDPDAEKLRKRTAYSLFSRVVEYSDLMQGISDITFGKKAALATIQVPNHPWGSQESSVSGFYDAISLDTFIQVVGLLINCSSGTATGDEVYIASSIGNLVVSPTDFQQAQTWTVYATYSTIDSKTLSGAIFVFNEAGELVSFGSKIHFHKTSMTKLLRVLDAANPSGAKAAAAPAPRAAFAAPVAAPVAAAPVAAAAAPVAAAGPSKIPELRALISAYTGVKEADIPDDVAFASLGLDSLSAMELAGELESSLGIKVSSDDVTTSTVASLAKQLPSGGAAPAPVAAAPAPVATPAPVAAPVAAAPVAAAPAGPSRVGELRALISAFTGIKEDDIADDVSFGSLGLDSLSAMELASEMESTLGLVISSDDVTSASVSSLSAMLGGGAADVSAPKSVISSTVASTTPASDFDNQTPDVITPASECGPELHEVGSALGIPWKRASPHYSTRFRMETVVYKEIDGTEIPADIYLPAEVPSNPMPIALMIHGGGHLTLSRRAVRPPQTSYLLANGILPVSIDYRLAPHVNVVDGSMADTRDACVWLQKELPELMAAKGIIVDPSKYVVIGFSTGGTLALTTAWTTAEANVAPPRAILSFYCPVEYDPDHPVLMGQGTRPRTMTLAQIRETLPNTVAVSHSFNALDTTKLGWLQPSDPRSELTLALIKEENGMSLLFNGLPEKGEQLPRADPARCAYFSPLTQVRAGNYNNIPTFMIFGEEDEVAPFRKGVEFGQALKEAGIRGGFHAVKGGKHIFDLALTPGSQGWAEHIAPGYDFIFTELENATRGQYILPS.

Residues 10 to 255 (IFSPQNSPPK…HDATNTDMAQ (246 aa)) form an N-terminal acylcarrier protein transacylase domain (SAT) region. A Ketosynthase family 3 (KS3) domain is found at 379–803 (SDAIAVVGAG…GSNSALICSE (425 aa)). Residues cysteine 551, histidine 687, and histidine 726 each act as for beta-ketoacyl synthase activity in the active site. Positions 906–1207 (LAFSGQSRTN…ADATQHTFQA (302 aa)) are malonyl-CoA:ACP transacylase (MAT) domain. Residue serine 993 is the For acyl/malonyl transferase activity of the active site. Positions 1287-1414 (EPRAAQLVRY…GDFTMTAGPH (128 aa)) are N-terminal hotdog fold. Positions 1287–1589 (EPRAAQLVRY…FHKTSMTKLL (303 aa)) constitute a PKS/mFAS DH domain. The product template (PT) domain stretch occupies residues 1292-1588 (QLVRYKGALG…HFHKTSMTKL (297 aa)). Catalysis depends on histidine 1323, which acts as the Proton acceptor; for dehydratase activity. The tract at residues 1436–1589 (DAEKLRKRTA…FHKTSMTKLL (154 aa)) is C-terminal hotdog fold. Aspartate 1500 (proton donor; for dehydratase activity) is an active-site residue. 2 Carrier domains span residues 1634-1711 (AAGP…SGGA) and 1742-1821 (PAGP…AADV). Residues serine 1671 and serine 1779 each carry the O-(pantetheine 4'-phosphoryl)serine modification. A thioesterase (TE) domain region spans residues 1879 to 2210 (TRFRMETVVY…YDFIFTELEN (332 aa)). Residues serine 1999 and aspartate 2148 each act as for thioesterase activity in the active site.

It catalyses the reaction 3 malonyl-CoA + acetyl-CoA + 2 H(+) = orsellinate + 3 CO2 + 4 CoA. It functions in the pathway secondary metabolite biosynthesis; terpenoid biosynthesis. Functionally, non-reducing polyketide synthase; part of the cluster that mediates the biosynthesis of LL-Z1272-beta, also known as ilicicolin B, a prenylated aryl-aldehyde produced by several fungi and that serves as a key pathway intermediate for many fungal meroterpenoids. The first step in the pathway is performed by the non-reducing polyketide synthase stbA that produces orsellinic acid by condensing acetyl-CoA with 3 malonyl-CoA units. The prenyltransferase stbC then prenylates orsenilic acid into grifolic acid. Finally, grifolic acid is reduced to ilicicolin B by the NRPS-like protein stbB. The polypeptide is Non-reducing polyketide synthase stbA (Stachybotrys bisbyi (Hyalostachybotrys bisbyi)).